A 225-amino-acid chain; its full sequence is DNA-binding response regulator MtrA (225 aa).

Positions 4–117 constitute a Response regulatory domain; it reads RILVVDDDAS…ELVARVRARL (114 aa). Residue D53 is modified to 4-aspartylphosphate. Positions 125 to 224 form a DNA-binding region, ompR/PhoB-type; it reads AEMLSIADVE…VRGVGYKAGP (100 aa).

Post-translationally, phosphorylated by MtrB.

In terms of biological role, member of the two-component regulatory system MtrA/MtrB. The chain is DNA-binding response regulator MtrA (mtrA) from Mycolicibacterium paratuberculosis (strain ATCC BAA-968 / K-10) (Mycobacterium paratuberculosis).